A 249-amino-acid chain; its full sequence is Triosephosphate isomerase (249 aa).

Asparagine 8–lysine 10 provides a ligand contact to substrate. The Electrophile role is filled by histidine 95. Glutamate 163 serves as the catalytic Proton acceptor. Glycine 169 and serine 209 together coordinate substrate.

This sequence belongs to the triosephosphate isomerase family. Homodimer.

It is found in the cytoplasm. It carries out the reaction D-glyceraldehyde 3-phosphate = dihydroxyacetone phosphate. It functions in the pathway carbohydrate biosynthesis; gluconeogenesis. It participates in carbohydrate degradation; glycolysis; D-glyceraldehyde 3-phosphate from glycerone phosphate: step 1/1. Involved in the gluconeogenesis. Catalyzes stereospecifically the conversion of dihydroxyacetone phosphate (DHAP) to D-glyceraldehyde-3-phosphate (G3P). In Orientia tsutsugamushi (strain Ikeda) (Rickettsia tsutsugamushi), this protein is Triosephosphate isomerase.